Consider the following 385-residue polypeptide: Iron uptake system component EfeM (385 aa).

An N-terminal signal peptide occupies residues 1-22 (MNFTKIAVSAGCILALCAGCGA).

Belongs to the EfeM/EfeO family. In terms of assembly, component of the iron transporter efeUOB/M complex composed of EfeU, EfeM and EfeB; EfeU is essential for the complex formation.

Its subcellular location is the cell membrane. The protein localises to the membrane raft. Part of the iron transporter system efeUOB/M involved in iron import. Specifically binds Fe(3+), which is produced by EfeB-mediated oxidation of Fe(2+), and delivers it to the cell membrane permease EfeU. In Bacillus subtilis (strain 168), this protein is Iron uptake system component EfeM.